Reading from the N-terminus, the 476-residue chain is Transcription factor HBP-1b(c1) (476 aa).

Disordered regions lie at residues 1 to 29 (ESRR…FGAP), 133 to 159 (HNND…PDID), and 171 to 207 (QLAA…RKSR). The segment covering 10–25 (AAAAAAAGDPRGPMPG) has biased composition (low complexity). Residues 135–144 (NDNWGESSMA) show a composition bias toward polar residues. Over residues 180-191 (SSDKSRDKLDHK) the composition is skewed to basic and acidic residues. Residues 189 to 252 (DHKSLRRLAQ…SSGDQSQSAS (64 aa)) form the bZIP domain. The tract at residues 191–211 (KSLRRLAQNREAARKSRLRKK) is basic motif. Residues 201–242 (EAARKSRLRKKAYIQNLESSRLKLTQLEQELQRARQQGIFIS) are a coiled coil. The leucine-zipper stretch occupies residues 217–231 (LESSRLKLTQLEQEL). Residues 256 to 473 (AVAFDMEYAR…RALSSLWLAR (218 aa)) form the DOG1 domain.

The protein belongs to the bZIP family. Binds DNA as a dimer.

It is found in the nucleus. Its function is as follows. Transcriptional activator that binds specifically to the DNA sequence 5'-TGACG-3'. Recognizes ocs elements like the as-1 motif of the cauliflower mosaic virus 35S promoter. Binding to the as-1-like cis elements mediate auxin- and salicylic acid-inducible transcription. Binds to the hexamer motif 5'-ACGTCA-3' of histone gene promoters. This Triticum aestivum (Wheat) protein is Transcription factor HBP-1b(c1).